A 705-amino-acid chain; its full sequence is Prolyl endopeptidase (705 aa).

The first 20 residues, 1-20 (MKYNKLSVAVAAFAFAAVSA), serve as a signal peptide directing secretion. Catalysis depends on charge relay system residues S556 and H675.

It belongs to the peptidase S9A family. In terms of assembly, monomer.

The protein resides in the periplasm. It carries out the reaction Hydrolysis of Pro-|-Xaa &gt;&gt; Ala-|-Xaa in oligopeptides.. Functionally, cleaves peptide bonds on the C-terminal side of prolyl residues within peptides that are up to approximately 30 amino acids long. Has an absolute requirement for an X-Pro bond in the trans configuration immediately preceding the Pro-Y scissible bond. The chain is Prolyl endopeptidase (f1pep1) from Elizabethkingia meningoseptica (Chryseobacterium meningosepticum).